Reading from the N-terminus, the 812-residue chain is Probable inorganic carbon transporter subunit DabA (812 aa).

The Zn(2+) site is built by C339, D341, H501, and C516.

The protein belongs to the inorganic carbon transporter (TC 9.A.2) DabA family. In terms of assembly, forms a complex with DabB. Zn(2+) is required as a cofactor.

It is found in the cell inner membrane. Its function is as follows. Part of an energy-coupled inorganic carbon pump. In Xanthomonas axonopodis pv. citri (strain 306), this protein is Probable inorganic carbon transporter subunit DabA.